Consider the following 358-residue polypeptide: UDP-N-acetylglucosamine--N-acetylmuramyl-(pentapeptide) pyrophosphoryl-undecaprenol N-acetylglucosamine transferase (358 aa).

UDP-N-acetyl-alpha-D-glucosamine-binding positions include 11–13 (TGG), N122, R161, S189, I243, 262–267 (ALTVCE), and Q288.

Belongs to the glycosyltransferase 28 family. MurG subfamily.

The protein resides in the cell inner membrane. It catalyses the reaction di-trans,octa-cis-undecaprenyl diphospho-N-acetyl-alpha-D-muramoyl-L-alanyl-D-glutamyl-meso-2,6-diaminopimeloyl-D-alanyl-D-alanine + UDP-N-acetyl-alpha-D-glucosamine = di-trans,octa-cis-undecaprenyl diphospho-[N-acetyl-alpha-D-glucosaminyl-(1-&gt;4)]-N-acetyl-alpha-D-muramoyl-L-alanyl-D-glutamyl-meso-2,6-diaminopimeloyl-D-alanyl-D-alanine + UDP + H(+). The protein operates within cell wall biogenesis; peptidoglycan biosynthesis. Its function is as follows. Cell wall formation. Catalyzes the transfer of a GlcNAc subunit on undecaprenyl-pyrophosphoryl-MurNAc-pentapeptide (lipid intermediate I) to form undecaprenyl-pyrophosphoryl-MurNAc-(pentapeptide)GlcNAc (lipid intermediate II). This is UDP-N-acetylglucosamine--N-acetylmuramyl-(pentapeptide) pyrophosphoryl-undecaprenol N-acetylglucosamine transferase from Coxiella burnetii (strain CbuK_Q154) (Coxiella burnetii (strain Q154)).